The following is a 186-amino-acid chain: Methyl-CpG-binding domain protein 3-like 1 (186 aa).

The interval 1-104 (MGKTSQRKQC…TSTDTVASAS (104 aa)) is transcription repressor.

This sequence belongs to the MBD3L family. Highly expressed in testis. Not detected in the other tissues tested.

Its subcellular location is the nucleus. Functionally, transcriptional repressor. The polypeptide is Methyl-CpG-binding domain protein 3-like 1 (Mbd3l1) (Mus musculus (Mouse)).